The sequence spans 603 residues: UvrABC system protein C (603 aa).

The GIY-YIG domain occupies 15–92 (DQPGCYLMKD…IKKHDPRFNI (78 aa)). The UVR domain maps to 197 to 232 (KTVKNDLMKKMQEAAENMEFEKAGEFRDQINAIETT).

The protein belongs to the UvrC family. Interacts with UvrB in an incision complex.

Its subcellular location is the cytoplasm. The UvrABC repair system catalyzes the recognition and processing of DNA lesions. UvrC both incises the 5' and 3' sides of the lesion. The N-terminal half is responsible for the 3' incision and the C-terminal half is responsible for the 5' incision. This chain is UvrABC system protein C, found in Listeria innocua serovar 6a (strain ATCC BAA-680 / CLIP 11262).